We begin with the raw amino-acid sequence, 495 residues long: Putative FAD-containing monooxygenase MymA (495 aa).

Residues Ser15, Glu36, Trp45, 56–57 (DS), and Val104 each bind FAD.

Belongs to the FAD-binding monooxygenase family. FAD serves as cofactor.

Functionally, required for maintaining the appropriate mycolic acid composition and permeability of the envelope on its exposure to acidic pH. This is Putative FAD-containing monooxygenase MymA (mymA) from Mycobacterium tuberculosis (strain CDC 1551 / Oshkosh).